The following is a 53-amino-acid chain: Metallothionein (53 aa).

A propeptide spanning residues 1-6 is cleaved from the precursor; sequence MRVIRM. Cu(+) is bound by residues Cys17, His19, Cys22, Cys24, Cys32, His33, Cys34, Cys43, and Cys45.

It belongs to the metallothionein superfamily.

In terms of biological role, metallothioneins are small proteins that have a high content of cysteine residues which allow them to bind heavy metal ions through clusters of thiolate bonds. MymT binds up to seven ions of Cu(+), with a preference for four to six Cu(+) ions, in a solvent-shielded core. MymT protects M.tuberculosis from copper toxicity. This Mycobacterium tuberculosis (strain CDC 1551 / Oshkosh) protein is Metallothionein (mymT).